A 255-amino-acid chain; its full sequence is AA9 family lytic polysaccharide monooxygenase D (255 aa).

The N-terminal stretch at 1-19 (MYRTLGSIALLAGGAAAHG) is a signal peptide. 2 residues coordinate Cu(2+): His18 and His92. 2 disulfide bridges follow: Cys65–Cys189 and Cys104–Cys111. Asn152 carries N-linked (GlcNAc...) asparagine glycosylation. 2 residues coordinate O2: His178 and Gln184. Position 186 (Tyr186) interacts with Cu(2+). Residue Asn220 is glycosylated (N-linked (GlcNAc...) asparagine).

The protein belongs to the polysaccharide monooxygenase AA9 family. Requires Cu(2+) as cofactor.

It localises to the secreted. The enzyme catalyses [(1-&gt;4)-beta-D-glucosyl]n+m + reduced acceptor + O2 = 4-dehydro-beta-D-glucosyl-[(1-&gt;4)-beta-D-glucosyl]n-1 + [(1-&gt;4)-beta-D-glucosyl]m + acceptor + H2O.. Functionally, lytic polysaccharide monooxygenase (LPMO) that depolymerizes crystalline and amorphous polysaccharides via the oxidation of scissile alpha- or beta-(1-4)-glycosidic bonds, yielding specifically C1 oxidation product. Catalysis by LPMOs requires the reduction of the active-site copper from Cu(II) to Cu(I) by a reducing agent and H(2)O(2) or O(2) as a cosubstrate. Is active on regenerated amorphous cellulose (RAC) in the presence of ascorbic acid or 3-methylcatechol. Also acts on phosphoric acid swollen cellulose (PASC) as a substrate. The chain is AA9 family lytic polysaccharide monooxygenase D from Thermothelomyces thermophilus (strain ATCC 42464 / BCRC 31852 / DSM 1799) (Sporotrichum thermophile).